We begin with the raw amino-acid sequence, 127 residues long: Histone H2A (127 aa).

Basic residues predominate over residues 1 to 20 (MSGRGKGGKAKTGGKAKSRS). The interval 1–23 (MSGRGKGGKAKTGGKAKSRSSRA) is disordered. Serine 2 carries the N-acetylserine modification. Serine 2 carries the phosphoserine modification. Residues lysine 6, lysine 9, and lysine 11 each carry the N6-acetyllysine; partial modification. Glutamine 106 is subject to N5-methylglutamine. Lysine 121 participates in a covalent cross-link: Glycyl lysine isopeptide (Lys-Gly) (interchain with G-Cter in ubiquitin).

Belongs to the histone H2A family. As to quaternary structure, the nucleosome is a histone octamer containing two molecules each of H2A, H2B, H3 and H4 assembled in one H3-H4 heterotetramer and two H2A-H2B heterodimers. The octamer wraps approximately 147 bp of DNA. Monoubiquitination of Lys-121 gives a specific tag for epigenetic transcriptional repression. Post-translationally, phosphorylation on Ser-2 is enhanced during mitosis. Phosphorylation on Ser-2 directly represses transcription.

It is found in the nucleus. Its subcellular location is the chromosome. Functionally, core component of nucleosome. Nucleosomes wrap and compact DNA into chromatin, limiting DNA accessibility to the cellular machineries which require DNA as a template. Histones thereby play a central role in transcription regulation, DNA repair, DNA replication and chromosomal stability. DNA accessibility is regulated via a complex set of post-translational modifications of histones, also called histone code, and nucleosome remodeling. This Caenorhabditis elegans protein is Histone H2A (his-3).